The primary structure comprises 285 residues: Putative sugar uptake protein lmo0424 (285 aa).

The next 9 helical transmembrane spans lie at 2–21, 31–50, 55–77, 111–133, 146–168, 172–194, 207–229, 233–255, and 262–284; these read SIYL…PIIA, QLLG…FWIL, TVLS…LLQF, WQTV…GVVM, SVSF…YVVT, FDVT…AIGI, VTFN…LATA, VATS…ILIF, and LEWT…LSLL.

It belongs to the GRP transporter (TC 2.A.7.5) family.

Its subcellular location is the cell membrane. This Listeria monocytogenes serovar 1/2a (strain ATCC BAA-679 / EGD-e) protein is Putative sugar uptake protein lmo0424.